We begin with the raw amino-acid sequence, 197 residues long: MDMQSRIRQLFQASIDTKQQAMDVLAPHIEQASQVMVNALLNEGKMLSCGNGGSAGDAQHFSSELLNRFERERPSLPAIALTTDSSTITSIANDYSYNEIFSKQIRALGQPGDVLLAISTSGNSANIIQAIQAAHDREMIVVALTGRDGGGMASLLLPEDVEIRVPANVTARIQEVHLLAIHCLCDLIDSQLFGSEE.

In terms of domain architecture, SIS spans 36-197; that stretch reads MVNALLNEGK…IDSQLFGSEE (162 aa). Residue 51–53 participates in substrate binding; the sequence is NGG. Positions 60 and 64 each coordinate Zn(2+). Residues Glu-64, 93–94, 119–121, Ser-124, and Gln-174 each bind substrate; these read ND and STS. Residues Gln-174 and His-182 each contribute to the Zn(2+) site.

This sequence belongs to the SIS family. GmhA subfamily. As to quaternary structure, homotetramer. The cofactor is Zn(2+).

It is found in the cytoplasm. It catalyses the reaction 2 D-sedoheptulose 7-phosphate = D-glycero-alpha-D-manno-heptose 7-phosphate + D-glycero-beta-D-manno-heptose 7-phosphate. The protein operates within carbohydrate biosynthesis; D-glycero-D-manno-heptose 7-phosphate biosynthesis; D-glycero-alpha-D-manno-heptose 7-phosphate and D-glycero-beta-D-manno-heptose 7-phosphate from sedoheptulose 7-phosphate: step 1/1. Functionally, catalyzes the isomerization of sedoheptulose 7-phosphate in D-glycero-D-manno-heptose 7-phosphate. The sequence is that of Phosphoheptose isomerase from Pseudomonas fluorescens (strain SBW25).